A 292-amino-acid chain; its full sequence is F-box/LRR-repeat protein 15 (292 aa).

Residues 12 to 59 (LLDLPWEDVLVTHIFCYLPLRQLVRLQRVSKQFYALIQVYLANCRTFD) form the F-box domain. LRR repeat units lie at residues 134–155 (HLQY…RSLA), 160–181 (GLRS…CYLS), 186–207 (KMRS…EEVA), 212–233 (ELEQ…RTVA), and 238–259 (KLQS…DPLR).

This sequence belongs to the FBXL15 family. Part of the SCF (SKP1-CUL1-F-box) E3 ubiquitin-protein ligase complex SCF(FBXL15).

Its subcellular location is the cytoplasm. It functions in the pathway protein modification; protein ubiquitination. Its function is as follows. Substrate recognition component of a SCF (SKP1-CUL1-F-box protein) E3 ubiquitin-protein ligase complex which mediates the ubiquitination and subsequent proteasomal degradation of target proteins. Acts as a positive regulator of the BMP signaling pathway. Required for dorsal/ventral pattern formation. In Salmo salar (Atlantic salmon), this protein is F-box/LRR-repeat protein 15 (fbxl15).